Reading from the N-terminus, the 448-residue chain is Probable D-serine dehydratase (448 aa).

Position 119 is an N6-(pyridoxal phosphate)lysine (K119).

The protein belongs to the serine/threonine dehydratase family. DsdA subfamily. It depends on pyridoxal 5'-phosphate as a cofactor.

The catalysed reaction is D-serine = pyruvate + NH4(+). The sequence is that of Probable D-serine dehydratase from Pseudomonas aeruginosa (strain ATCC 15692 / DSM 22644 / CIP 104116 / JCM 14847 / LMG 12228 / 1C / PRS 101 / PAO1).